Reading from the N-terminus, the 859-residue chain is MQEQYQPSEIEAKVQQHWQDTKTFEVTEDENKEKFYCLSMFPYPSGRLHMGHVRNYTIGDVVARYQRLQGKNVLQPIGWDSFGLPAENAAIKNSSAPAPWTYENIDYMKNQLKMLGFGYDWSREIATCTPEYYRWEQWFFTKLYEKGLVYKKTASVNWCPNDETVLANEQVQDGCCWRCDTEVVQKEIPQWFIKITDYADELLSDIDQLDEWPEQVKTMQRNWIGRSEGIEMTFQVADSDESFDIYTTRPDTVMGVTYVAIAAGHPLAEKAAANSPELAAFIEECKNADTTEAAMAAMEKKGVATGLYAIHPLTGKQVPIWAANFVLMNYGTGAVMSVPAHDQRDYEFAIKYGLAIEGVIKPEDAELDISEEAYTEKGVLFNSAEFDGLDFQAAFDAIDAKLTAEGKGKRQVNFRLRDWGVSRQRYWGAPIPMVTLADGTVVPTPEDQLPVILPEDVVMDGIQSPIKADKEWAKTQINGEDALRETDTFDTFMESSWYYARYCSPHADEMLDPAKANYWLPVDQYIGGIEHACMHLLYFRFFHKLLRDIGLVNSDEPAKRLLTQGMVLADAYYYTNEKGARVWVSPADVTVQETDDKGRTVKAVDSHGNELVYTGMSKMSKSKNNGIDPQEMVDKYGADTVRLFMMFAAPPELTLEWQESSVEGAHRFIKRLWKVAHDHVAKGTTVSLDVKSLDAKQKELRRELHKTIAKVGDDIERRQMFNTAIASVMELMNRLQKAPTETEQDRALMQEALSAVVRLLYPIIPHTSFSLWKELGNEENIEDVRWPEADESALVEDSKLIIVQVNGKLRAKITVPADATKEAVEAQGFAEEGVIKHTEGKTVRKVIYVPGKLLNIVAN.

A 'HIGH' region motif is present at residues Pro-42 to His-52. The 'KMSKS' region signature appears at Lys-618–Ser-622. Lys-621 lines the ATP pocket.

This sequence belongs to the class-I aminoacyl-tRNA synthetase family.

The protein resides in the cytoplasm. The catalysed reaction is tRNA(Leu) + L-leucine + ATP = L-leucyl-tRNA(Leu) + AMP + diphosphate. The sequence is that of Leucine--tRNA ligase from Shewanella woodyi (strain ATCC 51908 / MS32).